A 907-amino-acid polypeptide reads, in one-letter code: Putative pentatricopeptide repeat-containing protein At5g59900 (907 aa).

PPR repeat units lie at residues 103 to 137, 155 to 185, 191 to 225, 226 to 260, 261 to 295, 296 to 330, 331 to 365, 366 to 400, 401 to 435, 436 to 470, 471 to 505, 506 to 540, 541 to 575, 576 to 610, 611 to 645, 646 to 680, 681 to 715, 716 to 750, 751 to 782, 786 to 820, 821 to 855, and 856 to 890; these read STASFCILIHALVKANLFWPASSLLQTLLLRALKP, SSSSFDLLIQHYVRSRRVLDGVLVFKMMITK, EVRTLSALLHGLVKFRHFGLAMELFNDMVSVGIRP, DVYIYTGVIRSLCELKDLSRAKEMIAHMEATGCDV, NIVPYNVLIDGLCKKQKVWEAVGIKKDLAGKDLKP, DVVTYCTLVYGLCKVQEFEIGLEMMDEMLCLRFSP, SEAAVSSLVEGLRKRGKIEEALNLVKRVVDFGVSP, NLFVYNALIDSLCKGRKFHEAELLFDRMGKIGLRP, NDVTYSILIDMFCRRGKLDTALSFLGEMVDTGLKL, SVYPYNSLINGHCKFGDISAAEGFMAEMINKKLEP, TVVTYTSLMGGYCSKGKINKALRLYHEMTGKGIAP, SIYTFTTLLSGLFRAGLIRDAVKLFNEMAEWNVKP, NRVTYNVMIEGYCEEGDMSKAFEFLKEMTEKGIVP, DTYSYRPLIHGLCLTGQASEAKVFVDGLHKGNCEL, NEICYTGLLHGFCREGKLEEALSVCQEMVQRGVDL, DLVCYGVLIDGSLKHKDRKLFFGLLKEMHDRGLKP, DDVIYTSMIDAKSKTGDFKEAFGIWDLMINEGCVP, NEVTYTAVINGLCKAGFVNEAEVLCSKMQPVSSVP, NQVTYGCFLDILTKGEVDMQKAVELHNAILKG, NTATYNMLIRGFCRQGRIEEASELITRMIGDGVSP, DCITYTTMINELCRRNDVKKAIELWNSMTEKGIRP, and DRVAYNTLIHGCCVAGEMGKATELRNEMLRQGLIP. Residues 887 to 907 form a disordered region; it reads GLIPNNKTSRTTTSNDTSSKS. Residues 891–907 show a composition bias toward low complexity; it reads NNKTSRTTTSNDTSSKS.

It belongs to the PPR family. P subfamily.

The chain is Putative pentatricopeptide repeat-containing protein At5g59900 from Arabidopsis thaliana (Mouse-ear cress).